Consider the following 360-residue polypeptide: Coiled-coil domain-containing protein 86 (360 aa).

A compositionally biased stretch (basic residues) spans 1–12; sequence MDTPLRRSRRLG. Disordered stretches follow at residues 1–314 and 328–360; these read MDTP…ENER and LKRA…AAKI. Phosphoserine is present on residues S21, S24, S47, S50, and S58. Position 65 is a phosphothreonine (T65). A phosphoserine mark is found at S66, S69, S80, S91, S102, S110, S113, and S128. Positions 66 to 83 are enriched in polar residues; it reads SPGSPRLQQGSGLESPQG. Positions 153–164 are enriched in pro residues; it reads QLPPVPGSPEPY. S188, S217, and S218 each carry phosphoserine. A compositionally biased stretch (basic residues) spans 238–254; sequence GKPKSGRVWKDRSKKRF. Residues 272-323 adopt a coiled-coil conformation; the sequence is KERQERKLAKDFARHLEEEKERRRQEKKQRRAENLKRRLENERKAEVVQVIR. 2 stretches are compositionally biased toward basic and acidic residues: residues 273–295 and 302–314; these read ERQE…ERRR and RAEN…ENER. R342 is subject to Citrulline.

In terms of processing, citrullinated by PADI4.

The protein resides in the nucleus. Its subcellular location is the chromosome. The protein localises to the nucleolus. In terms of biological role, required for proper chromosome segregation during mitosis and error-free mitotic progression. The sequence is that of Coiled-coil domain-containing protein 86 from Pongo abelii (Sumatran orangutan).